The sequence spans 326 residues: Intracellular serine protease (326 aa).

One can recognise a Peptidase S8 domain in the interval 23-303 (PRGVEMIQAP…NGLLYLTAVE (281 aa)). Catalysis depends on charge relay system residues Asp-49, His-86, and Ser-244.

This sequence belongs to the peptidase S8 family.

Involved in the generation of beta- and alpha-amylases from the large amylase precursor. The sequence is that of Intracellular serine protease (isp) from Paenibacillus polymyxa (Bacillus polymyxa).